A 123-amino-acid polypeptide reads, in one-letter code: MQNKIQVKSVEKRENALIFCAENSEIEVKGLSARNHVLVDSDNLSFIYILENESSFIYVSIPHTCWEAMHEAMNNDVVMFVRVNDIEMELEGLKEEVEYLVENIEGNANYGEELVTAVEKVFL.

This sequence belongs to the UPF0738 family.

This Bacillus cereus (strain ZK / E33L) protein is UPF0738 protein BCE33L1094.